The chain runs to 372 residues: uncharacterized protein (372 aa).

Positions 328-353 (KKGQPCKDEDAVTVPLPSSDPGKETQ) are disordered.

Functionally, induces the SOS system when expressed in E.coli, therefore, it may play a role in DNA metabolism and/or in genome stability. This is an uncharacterized protein from Saccharomyces cerevisiae (strain ATCC 204508 / S288c) (Baker's yeast).